The primary structure comprises 250 residues: Probable transcriptional regulatory protein SYNAS_07390 (250 aa).

This sequence belongs to the TACO1 family.

Its subcellular location is the cytoplasm. In Syntrophus aciditrophicus (strain SB), this protein is Probable transcriptional regulatory protein SYNAS_07390.